The sequence spans 428 residues: MKNLYLPITIDHIARVEGKGGVEIIIGDDGVKEVKLNIIEGPRFFEAITIGKKLEEALAIYPRICSFCSAAHKLTALEAAEKAVGFVPREEIQALREVLYIGDMIESHALHLYLLVLPDYRGYSSPLKMVNEYKREIEIALKLKNLGTWMMDILGSRAIHQENAVLGGFGKLPEKSVLEKMKAELREALPLAEYTFELFAKLEQYSEVEGPITHLAVKPRGDAYGIYGDYIKASDGEEFPSEKYRDYIKEFVVEHSFAKHSHYKGRPFMVGAISRVINNADLLYGKAKELYEANKDLLKGTNPFANNLAQALEIVYFIERAIDLLDEALAKWPIKPRDEVEIKDGFGVSTTEAPRGILVYALKVENGRVSYADIITPTAFNLAMMEEHVRMMAEKHYNDDPERLKILAEMVVRAYDPCISCSVHVVRL.

Ni(2+) contacts are provided by C65, C68, C418, and C421. C68 serves as a coordination point for Fe cation. A Fe cation-binding site is contributed by C421.

It belongs to the [NiFe]/[NiFeSe] hydrogenase large subunit family. Heterotetramer of alpha, beta, gamma and delta subunits. The nickel-containing alpha and delta subunits constitute the hydrogenase activity. The beta and gamma subunits (flavin-containing dimer) constitute the sulfur reductase activity. The cofactor is Ni(2+). Fe cation serves as cofactor.

It is found in the cytoplasm. It catalyses the reaction H2 + NADP(+) = NADPH + H(+). Part of a bifunctional enzyme complex that functions as an NADPH-dependent hydrogen-evolving hydrogenase with sulfur-reducing activity. May play a role in hydrogen cycling during fermentative growth. Activity not exhibited with NAD. The alpha and delta subunits form the hydrogenase component that catalyzes the reduction of protons to evolve hydrogen. This Pyrococcus furiosus (strain ATCC 43587 / DSM 3638 / JCM 8422 / Vc1) protein is Sulfhydrogenase 1 subunit alpha.